Consider the following 122-residue polypeptide: Large ribosomal subunit protein uL14c (122 aa).

This sequence belongs to the universal ribosomal protein uL14 family. As to quaternary structure, part of the 50S ribosomal subunit.

The protein resides in the plastid. It is found in the chloroplast. Binds to 23S rRNA. This chain is Large ribosomal subunit protein uL14c, found in Lotus japonicus (Lotus corniculatus var. japonicus).